Consider the following 283-residue polypeptide: Coiled-coil domain-containing protein 107 (283 aa).

An N-terminal signal peptide occupies residues 1 to 24; that stretch reads MAGAVSLLGVVGLLLVSALSGVLG. The tract at residues 30–62 is disordered; the sequence is DLRAHPGNAAHPGSGATEPRRRPPLKDQRERTR. The span at 47–62 shows a compositional bias: basic and acidic residues; the sequence is EPRRRPPLKDQRERTR. A helical membrane pass occupies residues 65 to 85; it reads SLPLGALYTAAVAAFVLYKCL. A coiled-coil region spans residues 104–134; it reads LQSEQQLAQLTQQLAQTEQHLNNLMAQLDPL. 2 disordered regions span residues 164-207 and 258-283; these read KPDK…SRPL and AKGPSHSLGWEGGTTAEGRLKQSLFS. A compositionally biased stretch (gly residues) spans 176 to 187; that stretch reads EGSGGESAGGGD.

Its subcellular location is the membrane. The chain is Coiled-coil domain-containing protein 107 (CCDC107) from Homo sapiens (Human).